Consider the following 195-residue polypeptide: U8 snoRNA-decapping enzyme (195 aa).

Positions 18–173 (GWRHACHALL…IGSAREQLLE (156 aa)) constitute a Nudix hydrolase domain. Substrate contacts are provided by H24, R50, and F57. Mn(2+) contacts are provided by G59, E76, E80, and H99. The Nudix box motif lies at 61–82 (FVDTQDRSLEDGLNRELREELG). Position 170 (Q170) interacts with substrate. E173 is a Mn(2+) binding site.

The protein belongs to the Nudix hydrolase family. NUDT16 subfamily. As to quaternary structure, homodimer. Mg(2+) serves as cofactor. The cofactor is Mn(2+). It depends on Co(2+) as a cofactor. As to expression, expressed strongly in lung, kidney, adrenal gland, testis, heart and brain.

It is found in the nucleus. The protein localises to the nucleoplasm. It localises to the nucleolus. Its subcellular location is the cytoplasm. It catalyses the reaction a 5'-end (N(7)-methyl 5'-triphosphoguanosine)-ribonucleoside in mRNA + H2O = N(7)-methyl-GDP + a 5'-end phospho-ribonucleoside in mRNA + 2 H(+). The catalysed reaction is IDP + H2O = IMP + phosphate + H(+). The enzyme catalyses dIDP + H2O = dIMP + phosphate + H(+). It carries out the reaction a 5'-end NAD(+)-phospho-ribonucleoside in mRNA + H2O = a 5'-end phospho-adenosine-phospho-ribonucleoside in mRNA + beta-nicotinamide D-ribonucleotide + 2 H(+). It catalyses the reaction a 5'-end FAD-phospho-ribonucleoside in mRNA + H2O = a 5'-end phospho-adenosine-phospho-ribonucleoside in mRNA + FMN + 2 H(+). The catalysed reaction is a 5'-end CoA-ribonucleoside in mRNA + H2O = a 5'-end phospho-adenosine-phospho-ribonucleoside in mRNA + (R)-4'-phosphopantetheine + 2 H(+). Its activity is regulated as follows. The phosphatase activity is inhibited by the product IMP. Functionally, RNA-binding and decapping enzyme that catalyzes the cleavage of the cap structure of snoRNAs and mRNAs in a metal-dependent manner. Part of the U8 snoRNP complex that is required for the accumulation of mature 5.8S and 28S rRNA. Has diphosphatase activity and removes m7G and/or m227G caps from U8 snoRNA and leaves a 5'monophosphate on the RNA. Also catalyzes the cleavage of the cap structure on mRNAs. Does not hydrolyze cap analog structures like 7-methylguanosine nucleoside triphosphate (m7GpppG). Also hydrolysis m7G- and m227G U3-capped RNAs but with less efficiencies. Has broad substrate specificity with manganese or cobalt as cofactor and can act on various RNA species. Binds to the U8 snoRNA; metal is not required for RNA-binding. May play a role in the regulation of snoRNAs and mRNAs degradation. Also acts as a phosphatase; hydrolyzes the non-canonical purine nucleotides inosine diphosphate (IDP) and deoxyinosine diphosphate (dITP) as well as guanosine diphosphate (GDP), deoxyguanosine diphosphate (dGDP), xanthine diphosphate (XDP), inosine triphosphate (ITP) and deoxyinosine triphosphate (ITP) to their respective monophosphate derivatives and does not distinguish between the deoxy- and ribose forms. The order of activity with different substrates is IDP &gt; dIDP &gt;&gt; GDP = dGDP &gt; XDP = ITP = dITP. Binds strongly to GTP, ITP and XTP. Participates in the hydrolysis of dIDP/IDP and probably excludes non-canonical purines from RNA and DNA precursor pools, thus preventing their incorporation into RNA and DNA and avoiding chromosomal lesions. Exhibits decapping activity towards NAD-capped RNAs and FAD-capped RNAs. Exhibits decapping activity towards dpCoA-capped RNAs in vitro. The sequence is that of U8 snoRNA-decapping enzyme (NUDT16) from Homo sapiens (Human).